We begin with the raw amino-acid sequence, 436 residues long: Gamma-glutamyl phosphate reductase (436 aa).

Belongs to the gamma-glutamyl phosphate reductase family.

It localises to the cytoplasm. The enzyme catalyses L-glutamate 5-semialdehyde + phosphate + NADP(+) = L-glutamyl 5-phosphate + NADPH + H(+). Its pathway is amino-acid biosynthesis; L-proline biosynthesis; L-glutamate 5-semialdehyde from L-glutamate: step 2/2. Catalyzes the NADPH-dependent reduction of L-glutamate 5-phosphate into L-glutamate 5-semialdehyde and phosphate. The product spontaneously undergoes cyclization to form 1-pyrroline-5-carboxylate. This chain is Gamma-glutamyl phosphate reductase, found in Prochlorococcus marinus (strain MIT 9515).